Consider the following 382-residue polypeptide: Galactokinase (382 aa).

34–37 (EHTD) is a binding site for substrate. 124-130 (GAGLSSS) is an ATP binding site. Ser-130 and Glu-162 together coordinate Mg(2+). Asp-174 functions as the Proton acceptor in the catalytic mechanism. Substrate is bound at residue Tyr-223.

It belongs to the GHMP kinase family. GalK subfamily.

It is found in the cytoplasm. The catalysed reaction is alpha-D-galactose + ATP = alpha-D-galactose 1-phosphate + ADP + H(+). The protein operates within carbohydrate metabolism; galactose metabolism. In terms of biological role, catalyzes the transfer of the gamma-phosphate of ATP to D-galactose to form alpha-D-galactose-1-phosphate (Gal-1-P). This is Galactokinase from Salmonella gallinarum (strain 287/91 / NCTC 13346).